We begin with the raw amino-acid sequence, 803 residues long: Translation initiation factor IF-2 (803 aa).

Disordered stretches follow at residues 95 to 125 (PVVEQKRETEPAPTQEVPLTSDTTNLNEKAE) and 138 to 209 (EVKE…KLEQ). Over residues 111–121 (VPLTSDTTNLN) the composition is skewed to polar residues. Positions 138–155 (EVKEEAKKTPSEKKETPK) are enriched in basic and acidic residues. The span at 156–167 (KGPRKETRRSRK) shows a compositional bias: basic residues. Residues 168–188 (PDKEDKWEREELHMTKLVEER) show a composition bias toward basic and acidic residues. Residues 302–471 (PRAPVVTIMG…LLQAEVLELK (170 aa)) enclose the tr-type G domain. The tract at residues 311–318 (GHVDHGKT) is G1. 311–318 (GHVDHGKT) serves as a coordination point for GTP. The tract at residues 336–340 (GITQH) is G2. The interval 357–360 (DTPG) is G3. GTP contacts are provided by residues 357-361 (DTPGH) and 411-414 (NKID). The tract at residues 411–414 (NKID) is G4. The segment at 447–449 (SAK) is G5.

Belongs to the TRAFAC class translation factor GTPase superfamily. Classic translation factor GTPase family. IF-2 subfamily.

The protein resides in the cytoplasm. In terms of biological role, one of the essential components for the initiation of protein synthesis. Protects formylmethionyl-tRNA from spontaneous hydrolysis and promotes its binding to the 30S ribosomal subunits. Also involved in the hydrolysis of GTP during the formation of the 70S ribosomal complex. The polypeptide is Translation initiation factor IF-2 (Coxiella burnetii (strain CbuG_Q212) (Coxiella burnetii (strain Q212))).